A 1038-amino-acid polypeptide reads, in one-letter code: TonB-dependent receptor P39 (1038 aa).

An N-terminal signal peptide occupies residues 1-39; the sequence is MFKQKLKMKPKIKRNCTFSGLAFILMLLFSSFTVNNLNA. The short motif at 120 to 127 is the TonB box element; sequence DEVVVIGY. Residues 131–243 enclose the TBDR plug domain; the sequence is KRADVIGAVG…ANGVVLITTK (113 aa). The TBDR beta-barrel domain occupies 249–1038; it reads FPKMTVDYIS…EIVIGLNVEF (790 aa). Residues 1021–1038 carry the TonB C-terminal box motif; the sequence is SLRYPNQTEIVIGLNVEF.

The protein belongs to the TonB-dependent receptor family.

Its subcellular location is the cell outer membrane. Its function is as follows. TonB-dependent receptor probably involved in ulvan degradation. Ulvan is the main polysaccharide component of the Ulvales (green seaweed) cell wall. It is composed of disaccharide building blocks comprising 3-sulfated rhamnose (Rha3S) linked to D-glucuronic acid (GlcA), L-iduronic acid (IduA), or D-xylose (Xyl). The TonB-dependent receptor may mediate transport of ulvan oligosaccharides from the surface of the outer membrane to the periplasm for subsequent degradation. The sequence is that of TonB-dependent receptor P39 from Formosa agariphila (strain DSM 15362 / KCTC 12365 / LMG 23005 / KMM 3901 / M-2Alg 35-1).